The primary structure comprises 389 residues: MRPLVAARRRAAACCALAACMLALAFAPAAARAERLKDLAQIQGVRDNPLIGYGLVVGLDGTGDQTMQTPFTTQTLANMLANLGISINNGSANGGGSSAMTNMQLKNVAAVMVTATLPPFARPGEAIDVTVSSLGNAKSLRGGTLLLTPLKGADGQVYALAQGNMAVGGAGASANGSRVQVNQLAAGRIAGGAIVERSVPNAVAQMNGVLQLQLNDMDYGTAQRIVSAVNSSFGAGTATALDGRTIQLTAPADSAQQVAFMARLQNLEVSPERAAAKVILNARTGSIVMNQMVTLQNCAVAHGNLSVVVNTQPVVSQPGPFSNGQTVVAQQSQIQLKQDNGSLRMVTAGANLADVVKALNSLGATPADLMSILQAMKAAGALRADLEII.

The signal sequence occupies residues 1 to 33; sequence MRPLVAARRRAAACCALAACMLALAFAPAAARA.

It belongs to the FlgI family. As to quaternary structure, the basal body constitutes a major portion of the flagellar organelle and consists of four rings (L,P,S, and M) mounted on a central rod.

It is found in the periplasm. The protein resides in the bacterial flagellum basal body. Assembles around the rod to form the L-ring and probably protects the motor/basal body from shearing forces during rotation. This chain is Flagellar P-ring protein, found in Burkholderia pseudomallei (strain K96243).